We begin with the raw amino-acid sequence, 115 residues long: NADH-ubiquinone oxidoreductase chain 3 (115 aa).

The next 3 helical transmembrane spans lie at 3–23 (FVLI…ITFW), 55–75 (FFLV…LLPL), and 84–104 (LPLM…SLAY).

The protein belongs to the complex I subunit 3 family. In terms of assembly, core subunit of respiratory chain NADH dehydrogenase (Complex I) which is composed of 45 different subunits. Interacts with TMEM186. Interacts with TMEM242.

The protein localises to the mitochondrion inner membrane. It catalyses the reaction a ubiquinone + NADH + 5 H(+)(in) = a ubiquinol + NAD(+) + 4 H(+)(out). In terms of biological role, core subunit of the mitochondrial membrane respiratory chain NADH dehydrogenase (Complex I) which catalyzes electron transfer from NADH through the respiratory chain, using ubiquinone as an electron acceptor. Essential for the catalytic activity of complex I. The sequence is that of NADH-ubiquinone oxidoreductase chain 3 from Pan troglodytes (Chimpanzee).